Here is a 738-residue protein sequence, read N- to C-terminus: Polyphosphate kinase (738 aa).

Residues 1 to 48 (MIGNDRWVTEIETGPVTEARPDTNAREPGDRTPAAPPAATPAATTDQL) are disordered. The span at 19–30 (ARPDTNAREPGD) shows a compositional bias: basic and acidic residues. Asn91 contacts ATP. Mg(2+) contacts are provided by Arg427 and Arg457. The active-site Phosphohistidine intermediate is the His487. ATP contacts are provided by Tyr520, Arg620, and His648.

Belongs to the polyphosphate kinase 1 (PPK1) family. Mg(2+) is required as a cofactor. Post-translationally, an intermediate of this reaction is the autophosphorylated ppk in which a phosphate is covalently linked to a histidine residue through a N-P bond.

It catalyses the reaction [phosphate](n) + ATP = [phosphate](n+1) + ADP. Catalyzes the reversible transfer of the terminal phosphate of ATP to form a long-chain polyphosphate (polyP). The sequence is that of Polyphosphate kinase from Mycobacterium ulcerans (strain Agy99).